Here is a 185-residue protein sequence, read N- to C-terminus: Ribosome-recycling factor (185 aa).

Belongs to the RRF family.

The protein localises to the cytoplasm. In terms of biological role, responsible for the release of ribosomes from messenger RNA at the termination of protein biosynthesis. May increase the efficiency of translation by recycling ribosomes from one round of translation to another. This is Ribosome-recycling factor from Shewanella pealeana (strain ATCC 700345 / ANG-SQ1).